A 463-amino-acid polypeptide reads, in one-letter code: L-seryl-tRNA(Sec) selenium transferase (463 aa).

The residue at position 295 (Lys-295) is an N6-(pyridoxal phosphate)lysine.

The protein belongs to the SelA family. In terms of assembly, homodecamer; pentamer of dimers. Binds only one seryl-tRNA(Sec) per dimer. Requires pyridoxal 5'-phosphate as cofactor.

The protein resides in the cytoplasm. The enzyme catalyses L-seryl-tRNA(Sec) + selenophosphate + H(+) = L-selenocysteinyl-tRNA(Sec) + phosphate. It participates in aminoacyl-tRNA biosynthesis; selenocysteinyl-tRNA(Sec) biosynthesis; selenocysteinyl-tRNA(Sec) from L-seryl-tRNA(Sec) (bacterial route): step 1/1. Its function is as follows. Converts seryl-tRNA(Sec) to selenocysteinyl-tRNA(Sec) required for selenoprotein biosynthesis. This is L-seryl-tRNA(Sec) selenium transferase from Escherichia coli (strain SMS-3-5 / SECEC).